A 948-amino-acid chain; its full sequence is MEKVTSGLELVDISKRNFRKTLESLQEGAHSLLLLTIQWKEIESYFDSTRSVLEERAKELEALEESIKVKALELEKKEKELCLIDESMKAKQSEFEKKEKDFDLEQKAEVEKRKREVEQLEKFTTRMESVERVSDEKLMELGLRATELELKMEEVEKHRERIVAGDKLRGEFEPLVSLLAKNMGLSVTMPVKCSTLYLNENADEMVKKNTALARMVPYLDPAKVVLDAIEGSFKEYWKKDLGEADDRVVNSWIVLLENLIKMNLKITPQVKQEATPLGIAWLGKAKANMKNDPPQVFGCALFLAAYGLGSLTTHGVLLTLVERFLLYDHAPKLFRLLGLEEKVSGAVETLKKKEEYLATLKFICEFRLYKLCPGGRPGELLIEFFDSSDKAARVIAGTGTSMEAQKARREKKKADAAMAIKYIKEAKAETMFPAKILKRLAVVKNDESAQRAMEPVQKSYEKRQSTTKGVEKSEAKSSIPYEQKHVIKRPRLTEPTAPSQNLTVKQPEVVCVPTGKQVKESGADHQPDTIATHPSGTETKLNILSGSIKADMLRELVEKQPLKESEDLSNALKCTPDPAKLFLDTSMALCPTNTEGGYEFKMLITSASCSLLLNQLKKLLPKIGHPVKGDAKKLAVYWKDKIAKSKRDQLEVICFLQFLGIFGIVSEFKADDLLGLLDNSYWQTVSPDLCQFLGLDDAIPGFIQNLIKTGHRIKAIDYIYSFGMVHRFQPVSAIINDSLRITKESAEKSYREAKNESTTQVAAIDRQVRALRAAIKCISCHKLESEFQLGDLEEQIKSLLKLRRNTSNGSGSGSASSKPDSTIKQSQTAKPPTVAEVAPVTSNIPLEPSTEAASSSASKPFSKKNKRGKKRSMSGNNQSSGHIASHTSNHYPSHDYSLNQRLTWPVDNYDRGFTGFPNPDYNNNQWGQPEGPQFYHLYQPLDPRYRNY.

The stretch at 47–164 (DSTRSVLEER…VEKHRERIVA (118 aa)) forms a coiled coil. Disordered stretches follow at residues 447-500 (ESAQ…APSQ), 518-538 (VKES…SGTE), and 804-894 (RNTS…YPSH). Composition is skewed to basic and acidic residues over residues 459–475 (SYEK…KSEA) and 518–527 (VKESGADHQP). Low complexity predominate over residues 807–817 (SNGSGSGSASS). Over residues 818-830 (KPDSTIKQSQTAK) the composition is skewed to polar residues. The segment covering 861-872 (FSKKNKRGKKRS) has biased composition (basic residues). The segment covering 873–894 (MSGNNQSSGHIASHTSNHYPSH) has biased composition (polar residues).

The protein belongs to the Frigida family. Expressed at low levels during seed development.

The polypeptide is FRIGIDA-like protein 5 (FRL5) (Arabidopsis thaliana (Mouse-ear cress)).